A 246-amino-acid chain; its full sequence is Isoamyl acetate-hydrolyzing esterase (246 aa).

Ser46 acts as the Nucleophile in catalysis. The active-site Proton donor is Asp201. The active-site Proton acceptor is His204.

It belongs to the 'GDSL' lipolytic enzyme family. IAH1 subfamily.

The protein localises to the cytoplasm. The enzyme catalyses 3-methylbutyl acetate + H2O = 3-methylbutanol + acetate + H(+). In Schizosaccharomyces pombe (strain 972 / ATCC 24843) (Fission yeast), this protein is Isoamyl acetate-hydrolyzing esterase (iah1).